The sequence spans 207 residues: Anthranilate synthase component II (207 aa).

The Glutamine amidotransferase type-1 domain maps to 17–207 (RVLFVDNFDS…DVIRNFLAGL (191 aa)). L-glutamine is bound at residue 66–68 (GPG). The active-site Nucleophile; for GATase activity is cysteine 96. 146–147 (SL) lines the L-glutamine pocket. Catalysis depends on residues histidine 187 and glutamate 189.

In terms of assembly, tetramer of two components I and two components II.

It catalyses the reaction chorismate + L-glutamine = anthranilate + pyruvate + L-glutamate + H(+). It functions in the pathway amino-acid biosynthesis; L-tryptophan biosynthesis; L-tryptophan from chorismate: step 1/5. The chain is Anthranilate synthase component II (trpG1) from Haloarcula marismortui (strain ATCC 43049 / DSM 3752 / JCM 8966 / VKM B-1809) (Halobacterium marismortui).